A 927-amino-acid chain; its full sequence is Calmodulin-binding transcription activator CBT (927 aa).

The segment at residues 26 to 152 (YEKLVAEAAA…YRQTAEENAM (127 aa)) is a DNA-binding region (CG-1). The segment at 70–96 (LYDRKVVRNFRKDGHNWKKKKDGRTVQ) is necessary and sufficient for nuclear localization. The Nuclear localization signal motif lies at 72-79 (DRKVVRNF). An ANK repeat occupies 609–638 (SGWTALHWAAYHGRERMVATLLSAGANPSL). IQ domains follow at residues 757-786 (EIVAAMKIQHAFRNYNRKKAMRAAARIQSH) and 799-828 (MRRQVIRIQAAYRGHQVRRQYRKVIWSVGI). A calmodulin-binding region spans residues 826–845 (VGIVEKAILRWRKKRKGLRG). Residues 830–851 (EKAILRWRKKRKGLRGIASGMP) are necessary and sufficient for nuclear localization. The region spanning 882–911 (FNRSVVRVQALFRSYKAQQEYRRMKIAHEE) is the IQ 3 domain.

It belongs to the CAMTA family.

Its subcellular location is the nucleus. With respect to regulation, transcriptional activation activity is strongly reduced by calmodulin. Functionally, transcription activator that binds calmodulin in a calcium-dependent manner in vitro. Binds to the DNA consensus sequence 5'-T[AC]CG[CT]GT[GT][GT][GT][GT]T[GT]CG-3'. The polypeptide is Calmodulin-binding transcription activator CBT (Oryza sativa subsp. japonica (Rice)).